The sequence spans 530 residues: Autoinducer-2 kinase (530 aa).

It belongs to the FGGY kinase family.

It localises to the cytoplasm. The catalysed reaction is (S)-4,5-dihydroxypentane-2,3-dione + ATP = (2S)-2-hydroxy-3,4-dioxopentyl phosphate + ADP + H(+). Its function is as follows. Catalyzes the phosphorylation of autoinducer-2 (AI-2) to phospho-AI-2, which subsequently inactivates the transcriptional regulator LsrR and leads to the transcription of the lsr operon. Phosphorylates the ring-open form of (S)-4,5-dihydroxypentane-2,3-dione (DPD), which is the precursor to all AI-2 signaling molecules, at the C5 position. The protein is Autoinducer-2 kinase of Escherichia coli O139:H28 (strain E24377A / ETEC).